A 168-amino-acid polypeptide reads, in one-letter code: MRVLILAENEFEDLELFYPLYRLREEGLEVKVASSSLEVRVGKKGYQVRPDLTYEDVKVEDYAGLVIPGGKSPERVRINERAVEIVKDFLELGKPVAAICHGPQLLISAMAVKGRRMTSWIGIRDDLIAAGALYEDRPVVVDGNVITSRMPDDLPYFCGELIKILKRY.

The region spanning 1 to 166 (MRVLILAENE…FCGELIKILK (166 aa)) is the PfpI endopeptidase domain.

This sequence belongs to the peptidase C56 family.

This is an uncharacterized protein from Archaeoglobus fulgidus (strain ATCC 49558 / DSM 4304 / JCM 9628 / NBRC 100126 / VC-16).